Here is a 443-residue protein sequence, read N- to C-terminus: COP9 signalosome complex subunit 2 (443 aa).

The tract at residues 1–275 is mediates interaction with NIF3L1; that stretch reads MSDMEDDFMC…DESGSPRRTT (275 aa). In terms of domain architecture, PCI spans 254–416; the sequence is AHTDFFEAFK…QLLELDHQKR (163 aa).

It belongs to the CSN2 family. Component of the CSN complex, composed of COPS1/GPS1, COPS2, COPS3, COPS4, COPS5, COPS6, COPS7 (COPS7A or COPS7B), COPS8 and COPS9 isoform 1. In the complex, it probably interacts directly with COPS1, COPS4, COPS5, COPS6 and COPS7 (COPS7A or COPS7B). Specifically interacts with the ligand binding domain of the thyroid receptor (TR). Does not require the presence of thyroid hormone for its interaction. Interacts with CUL1 and CUL2. Interacts with IRF8/ICSBP1 and with nuclear receptors NR2F1 and NR0B1. Interacts with NIF3L1. Post-translationally, phosphorylated by CK2 and PKD kinases.

It localises to the cytoplasm. The protein localises to the nucleus. Essential component of the COP9 signalosome complex (CSN), a complex involved in various cellular and developmental processes. The CSN complex is an essential regulator of the ubiquitin (Ubl) conjugation pathway by mediating the deneddylation of the cullin subunits of SCF-type E3 ligase complexes, leading to decrease the Ubl ligase activity of SCF-type complexes such as SCF, CSA or DDB2. The complex is also involved in phosphorylation of p53/TP53, c-jun/JUN, IkappaBalpha/NFKBIA, ITPK1 and IRF8/ICSBP, possibly via its association with CK2 and PKD kinases. CSN-dependent phosphorylation of TP53 and JUN promotes and protects degradation by the Ubl system, respectively. Involved in early stage of neuronal differentiation via its interaction with NIF3L1. The chain is COP9 signalosome complex subunit 2 (COPS2) from Homo sapiens (Human).